Reading from the N-terminus, the 777-residue chain is Rho guanine nucleotide exchange factor 38 (777 aa).

The residue at position 34 (Thr-34) is a Phosphothreonine. The tract at residues 35–72 (DTVVESSVSGDHSGTLRRSQSDRTEYNQKLQEKMTPQG) is disordered. Residues 37 to 52 (VVESSVSGDHSGTLRR) are compositionally biased toward polar residues. The span at 53-66 (SQSDRTEYNQKLQE) shows a compositional bias: basic and acidic residues. Positions 94-285 (KREKIIKELI…KDINVNINEL (192 aa)) constitute a DH domain. The region spanning 327–536 (LKILTRGESQ…QNQVLEEIQN (210 aa)) is the BAR domain. Residues 582–645 (SAEELYQAKR…YSSFLKPYNP (64 aa)) enclose the SH3 1 domain. The segment at 673-694 (PASDSVTGTSESSIGDSSSSLS) is disordered. Over residues 679 to 694 (TGTSESSIGDSSSSLS) the composition is skewed to low complexity. The SH3 2 domain occupies 713–776 (VDEQIFYAVH…PANYLGKMTY (64 aa)).

May act as a guanine-nucleotide releasing factor. The sequence is that of Rho guanine nucleotide exchange factor 38 (ARHGEF38) from Homo sapiens (Human).